A 362-amino-acid chain; its full sequence is 3-dehydroquinate synthase (362 aa).

NAD(+)-binding positions include 70-75 (EGEQYK), 104-108 (GVIGD), 128-129 (TT), Lys-141, Lys-150, and 168-171 (TLTT). Positions 183, 246, and 263 each coordinate Zn(2+).

The protein belongs to the sugar phosphate cyclases superfamily. Dehydroquinate synthase family. It depends on Co(2+) as a cofactor. Zn(2+) is required as a cofactor. Requires NAD(+) as cofactor.

It localises to the cytoplasm. It carries out the reaction 7-phospho-2-dehydro-3-deoxy-D-arabino-heptonate = 3-dehydroquinate + phosphate. Its pathway is metabolic intermediate biosynthesis; chorismate biosynthesis; chorismate from D-erythrose 4-phosphate and phosphoenolpyruvate: step 2/7. Functionally, catalyzes the conversion of 3-deoxy-D-arabino-heptulosonate 7-phosphate (DAHP) to dehydroquinate (DHQ). This chain is 3-dehydroquinate synthase, found in Histophilus somni (strain 129Pt) (Haemophilus somnus).